The chain runs to 490 residues: GTPase Der (490 aa).

The EngA-type G 1 domain occupies 3–166; that stretch reads PVIALVGRPN…IALSEFPKDD (164 aa). GTP is bound by residues 9 to 16, 56 to 60, and 118 to 121; these read GRPNVGKS, DTGGI, and NKVD. Residues 164–191 form a disordered region; the sequence is KDDADEPEEGEEEIVAEGEEAKRIPGPS. Acidic residues predominate over residues 166–181; it reads DADEPEEGEEEIVAEG. Over residues 182-191 the composition is skewed to basic and acidic residues; sequence EEAKRIPGPS. Positions 196-369 constitute an EngA-type G 2 domain; sequence IKIAIIGRPN…SVQNSFKSAV (174 aa). GTP-binding positions include 202–209, 249–253, and 314–317; these read GRPNVGKS, DTAGV, and NKWD. Positions 370-454 constitute a KH-like domain; it reads TRWPTSRLTQ…PIRIEFKGGE (85 aa). Residues 452 to 490 are disordered; it reads GGENPYEGNKNTLTDRQVNKKRRLMSHHKKADKKRRDKR. A compositionally biased stretch (basic residues) spans 470–490; the sequence is NKKRRLMSHHKKADKKRRDKR.

This sequence belongs to the TRAFAC class TrmE-Era-EngA-EngB-Septin-like GTPase superfamily. EngA (Der) GTPase family. As to quaternary structure, associates with the 50S ribosomal subunit.

In terms of biological role, GTPase that plays an essential role in the late steps of ribosome biogenesis. The chain is GTPase Der from Pseudomonas fluorescens (strain ATCC BAA-477 / NRRL B-23932 / Pf-5).